The primary structure comprises 255 residues: NAD kinase (255 aa).

The active-site Proton acceptor is aspartate 44. NAD(+)-binding positions include 44–45, histidine 49, 114–115, aspartate 144, alanine 152, 155–160, and glutamine 216; these read DG, NE, and SAYNLS.

Belongs to the NAD kinase family. It depends on a divalent metal cation as a cofactor.

The protein localises to the cytoplasm. The catalysed reaction is NAD(+) + ATP = ADP + NADP(+) + H(+). In terms of biological role, involved in the regulation of the intracellular balance of NAD and NADP, and is a key enzyme in the biosynthesis of NADP. Catalyzes specifically the phosphorylation on 2'-hydroxyl of the adenosine moiety of NAD to yield NADP. The polypeptide is NAD kinase (Rickettsia canadensis (strain McKiel)).